A 156-amino-acid chain; its full sequence is CRIB domain-containing protein RIC11 (156 aa).

Residues 26–39 form the CRIB domain; it reads IGHPTEVKHVAHIG. Positions 87–156 are disordered; it reads QDQLNISDRI…SMVSRLNSNA (70 aa). Positions 109-120 are enriched in basic residues; that stretch reads IHTKSKNRRKKP. Over residues 121-142 the composition is skewed to low complexity; that stretch reads SSTSSPRSRPSPKSSRSMGLSK.

Its function is as follows. Functions as a downstream effector of Rho-related GTP binding proteins of the 'Rho of Plants' (ROPs) family. Participates in the propagation of ROP GTPase signals in specific cellular responses. The chain is CRIB domain-containing protein RIC11 (RIC11) from Arabidopsis thaliana (Mouse-ear cress).